Consider the following 332-residue polypeptide: Succinylglutamate desuccinylase (332 aa).

Zn(2+) is bound by residues His59, Glu62, and His151. The active site involves Glu215.

This sequence belongs to the AspA/AstE family. Succinylglutamate desuccinylase subfamily. Zn(2+) serves as cofactor.

It carries out the reaction N-succinyl-L-glutamate + H2O = L-glutamate + succinate. It functions in the pathway amino-acid degradation; L-arginine degradation via AST pathway; L-glutamate and succinate from L-arginine: step 5/5. Transforms N(2)-succinylglutamate into succinate and glutamate. In Pseudomonas aeruginosa (strain LESB58), this protein is Succinylglutamate desuccinylase.